A 318-amino-acid chain; its full sequence is uncharacterized protein (318 aa).

Positions 67-157 (LAFDELEKEK…SLKAIQTSQE (91 aa)) form a coiled coil. A disordered region spans residues 172 to 318 (ESTNKVEKNA…KGFFARLFNL (147 aa)). 2 stretches are compositionally biased toward basic and acidic residues: residues 175–193 (NKVE…KDSK) and 219–236 (KVDK…EKAS). Polar residues predominate over residues 237-248 (VEQSKNENAAET). 2 stretches are compositionally biased toward basic and acidic residues: residues 249 to 274 (SNKE…HAEA) and 300 to 310 (SEPKPQEEKKG).

This is an uncharacterized protein from Staphylococcus aureus (strain Mu50 / ATCC 700699).